Consider the following 213-residue polypeptide: NADH-quinone oxidoreductase subunit C (213 aa).

This sequence belongs to the complex I 30 kDa subunit family. As to quaternary structure, NDH-1 is composed of 14 different subunits. Subunits NuoB, C, D, E, F, and G constitute the peripheral sector of the complex.

The protein resides in the cell inner membrane. It carries out the reaction a quinone + NADH + 5 H(+)(in) = a quinol + NAD(+) + 4 H(+)(out). In terms of biological role, NDH-1 shuttles electrons from NADH, via FMN and iron-sulfur (Fe-S) centers, to quinones in the respiratory chain. The immediate electron acceptor for the enzyme in this species is believed to be ubiquinone. Couples the redox reaction to proton translocation (for every two electrons transferred, four hydrogen ions are translocated across the cytoplasmic membrane), and thus conserves the redox energy in a proton gradient. The sequence is that of NADH-quinone oxidoreductase subunit C from Rhodospirillum rubrum (strain ATCC 11170 / ATH 1.1.1 / DSM 467 / LMG 4362 / NCIMB 8255 / S1).